A 238-amino-acid polypeptide reads, in one-letter code: Uridylate kinase (238 aa).

12–15 (KLSG) provides a ligand contact to ATP. Glycine 54 provides a ligand contact to UMP. ATP contacts are provided by glycine 55 and arginine 59. Residues aspartate 74 and 135-142 (TGNPYFTT) contribute to the UMP site. Residues threonine 162, tyrosine 168, and aspartate 171 each coordinate ATP.

The protein belongs to the UMP kinase family. As to quaternary structure, homohexamer.

The protein resides in the cytoplasm. The catalysed reaction is UMP + ATP = UDP + ADP. Its pathway is pyrimidine metabolism; CTP biosynthesis via de novo pathway; UDP from UMP (UMPK route): step 1/1. With respect to regulation, inhibited by UTP. Catalyzes the reversible phosphorylation of UMP to UDP. The chain is Uridylate kinase from Nitratidesulfovibrio vulgaris (strain ATCC 29579 / DSM 644 / CCUG 34227 / NCIMB 8303 / VKM B-1760 / Hildenborough) (Desulfovibrio vulgaris).